The primary structure comprises 483 residues: Glutamyl-tRNA(Gln) amidotransferase subunit A (483 aa).

Catalysis depends on charge relay system residues K77 and S152. S176 functions as the Acyl-ester intermediate in the catalytic mechanism.

The protein belongs to the amidase family. GatA subfamily. In terms of assembly, heterotrimer of A, B and C subunits.

It catalyses the reaction L-glutamyl-tRNA(Gln) + L-glutamine + ATP + H2O = L-glutaminyl-tRNA(Gln) + L-glutamate + ADP + phosphate + H(+). In terms of biological role, allows the formation of correctly charged Gln-tRNA(Gln) through the transamidation of misacylated Glu-tRNA(Gln) in organisms which lack glutaminyl-tRNA synthetase. The reaction takes place in the presence of glutamine and ATP through an activated gamma-phospho-Glu-tRNA(Gln). The protein is Glutamyl-tRNA(Gln) amidotransferase subunit A of Shouchella clausii (strain KSM-K16) (Alkalihalobacillus clausii).